Consider the following 91-residue polypeptide: Small ribosomal subunit protein bS20 (91 aa).

The segment covering 1 to 18 has biased composition (basic and acidic residues); the sequence is MPLHKSAEKRLRQSEKRN. Positions 1–24 are disordered; that stretch reads MPLHKSAEKRLRQSEKRNVRNRAR.

The protein belongs to the bacterial ribosomal protein bS20 family.

Functionally, binds directly to 16S ribosomal RNA. This Chlorobium phaeobacteroides (strain DSM 266 / SMG 266 / 2430) protein is Small ribosomal subunit protein bS20.